The following is a 225-amino-acid chain: MSTFKSLSLSALLFIAFLFTCARGATFNIINNCPFTVWAAAVPGGGKRLDRGQNWIINPGAGTKGARVWPRTGCNFDGAGRGKCQTGDCNGLLQCQAFGQPPNTLAEYALNQFNNLDFFDISLVDGFNVAMEFSPTSGGCTRGIKCTADINGQCPNELRAPGGCNNPCTVFKTDQYCCNSGNCGLTNFSKFFKDRCPDAYSYPKDDQTSTFTCPAGTNYKVVFCP.

The signal sequence occupies residues 1–24 (MSTFKSLSLSALLFIAFLFTCARG). Cystine bridges form between Cys-33–Cys-224, Cys-74–Cys-84, Cys-89–Cys-95, Cys-140–Cys-213, Cys-146–Cys-196, Cys-154–Cys-164, Cys-168–Cys-177, and Cys-178–Cys-183. A glycan (N-linked (GlcNAc...) asparagine) is linked at Asn-187.

It belongs to the thaumatin family. Post-translationally, N-glycosylated. In terms of tissue distribution, woody stem plug.

The protein resides in the secreted. Functionally, has antifungal activity. The chain is Thaumatin-like protein (tlp) from Actinidia deliciosa (Kiwi).